Reading from the N-terminus, the 343-residue chain is N-acetyl-gamma-glutamyl-phosphate reductase (343 aa).

Cysteine 147 is an active-site residue.

Belongs to the NAGSA dehydrogenase family. Type 1 subfamily.

The protein localises to the cytoplasm. The catalysed reaction is N-acetyl-L-glutamate 5-semialdehyde + phosphate + NADP(+) = N-acetyl-L-glutamyl 5-phosphate + NADPH + H(+). The protein operates within amino-acid biosynthesis; L-arginine biosynthesis; N(2)-acetyl-L-ornithine from L-glutamate: step 3/4. Catalyzes the NADPH-dependent reduction of N-acetyl-5-glutamyl phosphate to yield N-acetyl-L-glutamate 5-semialdehyde. The sequence is that of N-acetyl-gamma-glutamyl-phosphate reductase from Listeria monocytogenes serotype 4a (strain HCC23).